We begin with the raw amino-acid sequence, 183 residues long: Adenylate kinase (183 aa).

12-17 (GAGKGT) is a binding site for ATP. The segment at 32–61 (STGDLLRSEVAAGSELGKEAEAVMNRGELV) is NMP. AMP contacts are provided by residues T33, R38, 59-61 (ELV), 86-89 (GFPR), and Q93. An LID region spans residues 127-133 (SRGRADD). Position 128 (R128) interacts with ATP. Residues R130 and R141 each contribute to the AMP site. Residue G169 participates in ATP binding.

The protein belongs to the adenylate kinase family. In terms of assembly, monomer.

Its subcellular location is the cytoplasm. It carries out the reaction AMP + ATP = 2 ADP. The protein operates within purine metabolism; AMP biosynthesis via salvage pathway; AMP from ADP: step 1/1. In terms of biological role, catalyzes the reversible transfer of the terminal phosphate group between ATP and AMP. Plays an important role in cellular energy homeostasis and in adenine nucleotide metabolism. The chain is Adenylate kinase from Synechococcus sp. (strain CC9902).